The primary structure comprises 698 residues: Transferrin-binding protein B (698 aa).

Residues 1-20 (MNNPLVNQAAMVLPVFLLSA) form the signal peptide. Cys21 carries the N-palmitoyl cysteine lipid modification. Residue Cys21 is the site of S-diacylglycerol cysteine attachment. 6 disordered regions span residues 33–58 (VDTE…QKDQ), 83–102 (IKLS…KNPS), 294–324 (FSGK…SLSG), 349–383 (GSAK…SENS), 428–479 (ESGK…GDAN), and 669–698 (TKNA…KPVQ). The segment covering 46–56 (DVSSEKPQAQK) has biased composition (polar residues). Residues 299–315 (EATDKPKNDGETKEHPF) show a composition bias toward basic and acidic residues. A compositionally biased stretch (low complexity) spans 369–383 (AAASNGAAGTSSENS). Residues 460–476 (QAGTAENGNPAASNTAG) are compositionally biased toward polar residues. Residues 671 to 686 (NATDASGNGNSASSAT) are compositionally biased toward low complexity.

Belongs to the TbpB family. Binds only human holo-transferrin (TF), via the TF C-terminus. Forms a large complex with TbpA and TF. Interacts via its C-terminal domain with Slam1.

The protein resides in the cell outer membrane. It localises to the cell surface. Its function is as follows. Neisseria acquires iron by extracting it from serum transferrin (TF) in its human host. Acts as a TF receptor and is required for TF utilization. Involved in the initial capture of TF. Helps select only those TF molecules that can be used as an iron source and concentrates them on the cell surface, maintaining the iron-loaded status of the TF C-terminal lobe until its delivery to TbpA. The sequence is that of Transferrin-binding protein B from Neisseria meningitidis serogroup A / serotype 4A (strain DSM 15465 / Z2491).